The primary structure comprises 83 residues: U-actitoxin-Aeq6b (83 aa).

Positions 1-20 (MIYKAVFVCLVLVLLGDVFC) are cleaved as a signal peptide. A propeptide spanning residues 21–36 (SPRNSGGGTLNDNPFE) is cleaved from the precursor. The residue at position 82 (proline 82) is a Proline amide.

In terms of processing, contains 3 disulfide bonds. In terms of tissue distribution, expressed by acrorhagi.

Its subcellular location is the secreted. The protein localises to the nematocyst. In terms of biological role, toxin. The chain is U-actitoxin-Aeq6b from Actinia equina (Beadlet anemone).